The primary structure comprises 181 residues: Major urinary protein 11 (181 aa).

The signal sequence occupies residues 1–19 (MKMLLLLLCLGLTLVCVHA). The cysteines at positions 83 and 176 are disulfide-linked.

This sequence belongs to the calycin superfamily. Lipocalin family.

It localises to the secreted. Its function is as follows. Major urinary proteins (Mups) bind pheromones, and thus stabilize them to allow slow release into the air from urine marks. May protect pheromones from oxidation. May also act as pheromones themselves. In this context, they play a role in the regulation of social behaviors, such as aggression, mating, pup-suckling, territory establishment and dominance. Binds the pheromone analog 2-sec-butyl-4,5-dihydrothiazole (SBT) in vitro. The sequence is that of Major urinary protein 11 from Mus musculus (Mouse).